The primary structure comprises 347 residues: MAPQAYDRDKALELALAQVEKSFGKGAVMRLGEEARQPISVIPTGSIALDVALGIGGLPRGRIVEIYGPESSGKTTVALHAVANAQAAGGVAAFIDAEHALDPDYARKLGVDTDALLVSQPDTGEQALEIADMLVRSGAIDIIVIDSVAALVPRAEIEGEMGDSHVGLQARLMSQALRKMTSALNNSGTTAIFINQLREKIGVMFGSPETTTGGKALKFYASVRLDVRRIETLKDGSDAVGNRTRVKVVKNKVSPPFKQAEFDILYGQGISKEGSLIDMGVEQGFIRKSGSWYTYEGDQLGQGKENARKFLLENTDVRDEIEKKIKEKLGIGADLTAEDAAEVPADF.

68–75 (GPESSGKT) is an ATP binding site.

The protein belongs to the RecA family.

It is found in the cytoplasm. In terms of biological role, can catalyze the hydrolysis of ATP in the presence of single-stranded DNA, the ATP-dependent uptake of single-stranded DNA by duplex DNA, and the ATP-dependent hybridization of homologous single-stranded DNAs. It interacts with LexA causing its activation and leading to its autocatalytic cleavage. This is Protein RecA from Nocardia farcinica (strain IFM 10152).